Reading from the N-terminus, the 484-residue chain is Arachin Ahy-3 (484 aa).

A signal peptide spans M1–S20. 2 disulfides stabilise this stretch: C32/C65 and C108/C305. One can recognise a Cupin type-1 1 domain in the interval Q35–R253. Positions Q208–F233 are disordered. The propeptide occupies D295–N298. One can recognise a Cupin type-1 2 domain in the interval M311 to R460. Positions M479 to A484 are excised as a propeptide.

It belongs to the 11S seed storage protein (globulins) family. In terms of assembly, hexamer; each subunit is composed of an acidic and a basic chain derived from a single precursor and linked by a disulfide bond.

This Arachis hypogaea (Peanut) protein is Arachin Ahy-3.